We begin with the raw amino-acid sequence, 156 residues long: Small ribosomal subunit protein uS7 (156 aa).

Belongs to the universal ribosomal protein uS7 family. Part of the 30S ribosomal subunit. Contacts proteins S9 and S11.

One of the primary rRNA binding proteins, it binds directly to 16S rRNA where it nucleates assembly of the head domain of the 30S subunit. Is located at the subunit interface close to the decoding center, probably blocks exit of the E-site tRNA. The protein is Small ribosomal subunit protein uS7 of Micrococcus luteus (strain ATCC 4698 / DSM 20030 / JCM 1464 / CCM 169 / CCUG 5858 / IAM 1056 / NBRC 3333 / NCIMB 9278 / NCTC 2665 / VKM Ac-2230) (Micrococcus lysodeikticus).